Consider the following 121-residue polypeptide: Large ribosomal subunit protein uL22 (121 aa).

It belongs to the universal ribosomal protein uL22 family. As to quaternary structure, part of the 50S ribosomal subunit.

This protein binds specifically to 23S rRNA; its binding is stimulated by other ribosomal proteins, e.g. L4, L17, and L20. It is important during the early stages of 50S assembly. It makes multiple contacts with different domains of the 23S rRNA in the assembled 50S subunit and ribosome. Its function is as follows. The globular domain of the protein is located near the polypeptide exit tunnel on the outside of the subunit, while an extended beta-hairpin is found that lines the wall of the exit tunnel in the center of the 70S ribosome. The sequence is that of Large ribosomal subunit protein uL22 from Paenarthrobacter aurescens (strain TC1).